The following is a 522-amino-acid chain: F-box-like/WD repeat-containing protein TBL1Y (522 aa).

Serine 2 carries the post-translational modification N-acetylserine. The LisH domain occupies 4-36 (TSDEVNFLVYRYLQESGFSHSAFTFGIESHISQ). The F-box-like domain maps to 41 to 86 (GTLVPPSALISILQKGLQYVEAEISINKDGTVFDSRPIESLSLIVA). The residue at position 102 (lysine 102) is an N6-acetyllysine. The residue at position 130 (serine 130) is a Phosphoserine. WD repeat units follow at residues 177–216 (GHES…NGGS), 233–272 (PSNK…ASTL), 274–313 (QHKG…AKQQ), 316–354 (FHSA…PVKT), 357–396 (GHTN…CVHD), 399–447 (AHSK…CTHT), 450–489 (KHQE…LVHS), and 491–521 (QGTG…CVLD). Lysine 287 participates in a covalent cross-link: Glycyl lysine isopeptide (Lys-Gly) (interchain with G-Cter in SUMO2).

This sequence belongs to the WD repeat EBI family. As to quaternary structure, probable component of the N-Cor repressor complex and some E3 ubiquitin ligase complex. Interacts with NCOR2. Fetal brain and prostate. Expressed in the cochlear spiral ganglion neurons, and in outer and inner hair cells.

The protein resides in the nucleus. Functionally, F-box-like protein involved in the recruitment of the ubiquitin/19S proteasome complex to nuclear receptor-regulated transcription units. Plays an essential role in transcription activation mediated by nuclear receptors. Probably acts as integral component of corepressor complexes that mediates the recruitment of the 19S proteasome complex, leading to the subsequent proteasomal degradation of transcription repressor complexes, thereby allowing cofactor exchange. In Homo sapiens (Human), this protein is F-box-like/WD repeat-containing protein TBL1Y (TBL1Y).